We begin with the raw amino-acid sequence, 1087 residues long: Exoglucanase XynX (1087 aa).

Residues 1–30 (MKNNLSKFVSIFTAFIMIFGTSLFFPHVSA) form the signal peptide. Residues 37–188 (ANLVSNGDFE…YIDDVVVTPQ (152 aa)) form the CBM-cenC domain. Residues 204 to 527 (QNDIPDLSSV…KPAYWAIADP (324 aa)) form the GH10 domain. E347 acts as the Proton donor in catalysis. D389 is an active-site residue. Residue E452 is the Nucleophile of the active site. 3 SLH domains span residues 903 to 966 (KKSV…YNGE), 967 to 1025 (FSDV…KEEN), and 1028 to 1087 (ATSF…SNNL).

The protein belongs to the glycosyl hydrolase 10 (cellulase F) family.

The catalysed reaction is Hydrolysis of (1-&gt;4)-beta-D-glucosidic linkages in cellulose and cellotetraose, releasing cellobiose from the non-reducing ends of the chains.. The chain is Exoglucanase XynX (xynX) from Acetivibrio thermocellus (Hungateiclostridium thermocellum).